The following is a 150-amino-acid chain: 1,4-dihydroxy-2-naphthoyl-CoA hydrolase (150 aa).

Aspartate 19 is an active-site residue.

The protein belongs to the 4-hydroxybenzoyl-CoA thioesterase family. DHNA-CoA hydrolase subfamily.

The enzyme catalyses 1,4-dihydroxy-2-naphthoyl-CoA + H2O = 1,4-dihydroxy-2-naphthoate + CoA + H(+). It functions in the pathway cofactor biosynthesis; phylloquinone biosynthesis. It participates in quinol/quinone metabolism; 1,4-dihydroxy-2-naphthoate biosynthesis; 1,4-dihydroxy-2-naphthoate from chorismate: step 7/7. In terms of biological role, catalyzes the hydrolysis of 1,4-dihydroxy-2-naphthoyl-CoA (DHNA-CoA) to 1,4-dihydroxy-2-naphthoate (DHNA), a reaction involved in phylloquinone (vitamin K1) biosynthesis. The sequence is that of 1,4-dihydroxy-2-naphthoyl-CoA hydrolase from Prochlorococcus marinus (strain MIT 9215).